Here is a 123-residue protein sequence, read N- to C-terminus: Large ribosomal subunit protein eL8 (123 aa).

This sequence belongs to the eukaryotic ribosomal protein eL8 family. In terms of assembly, part of the 50S ribosomal subunit. Probably part of the RNase P complex.

It localises to the cytoplasm. Multifunctional RNA-binding protein that recognizes the K-turn motif in ribosomal RNA, the RNA component of RNase P, box H/ACA, box C/D and box C'/D' sRNAs. The sequence is that of Large ribosomal subunit protein eL8 from Methanopyrus kandleri (strain AV19 / DSM 6324 / JCM 9639 / NBRC 100938).